We begin with the raw amino-acid sequence, 106 residues long: MITVDITVNDEGKVTDVIMDGHADHGEYGHDIVCAGASAVLFGSVNAIIGLTSERPDINYDDNGGHFHIRSVDTNNDEAQLILQTMLVSLQTIEEEYNENIRLNYK.

Histidine 22 (proton donor) is an active-site residue. The active-site Nucleophile is cysteine 34.

Belongs to the Prp family. In terms of assembly, homodimer. A mutant protein unable to cleave bL27 copurifies with its substrate.

With respect to regulation, not inhibited by short peptide analogs; a 6-mer inhibits only 20% while a 13-mer inhibits 63%. Inhibited by Ac-KLNLQFF-CH(2) which binds covalantly to Cys-34. Inhibited by mersalyl acid (C13H18HgNO6). An essential cysteine protease that cleaves the N-terminal 9 amino acids from ribosomal protein bL27. Also acts as an N-terminal protease on the major capsid and scaffold assembly proteins of bacteriophage 80alpha. Cleavage of the N-terminus of bL27 (and thus this enzyme) is essential for growth; it cannot be replaced by a 'pre-cleaved' or non-cleavable form of bL27. Might serve a chaperone function during ribosome assembly. The chain is Ribosomal processing cysteine protease Prp from Staphylococcus aureus (strain NCTC 8325 / PS 47).